Here is a 90-residue protein sequence, read N- to C-terminus: Phosphocarrier protein NPr (90 aa).

The HPr domain occupies 2 to 90 (TVKQTVEITN…ALFNSGFDED (89 aa)). Residue histidine 16 is the Pros-phosphohistidine intermediate of the active site.

Belongs to the HPr family.

Its subcellular location is the cytoplasm. Component of the phosphoenolpyruvate-dependent nitrogen-metabolic phosphotransferase system (nitrogen-metabolic PTS), that seems to be involved in regulating nitrogen metabolism. The phosphoryl group from phosphoenolpyruvate (PEP) is transferred to the phosphoryl carrier protein NPr by enzyme I-Ntr. Phospho-NPr then transfers it to EIIA-Ntr. Could function in the transcriptional regulation of sigma-54 dependent operons in conjunction with the NPr (PtsO) and EIIA-Ntr (PtsN) proteins. This is Phosphocarrier protein NPr (ptsO) from Escherichia coli O157:H7.